Reading from the N-terminus, the 205-residue chain is MASDHQSPATKQQQPSSKIVLFEQENFQGRCHELSGPCTSLKEAGMEKIGSILVHSGPWVGYEQQNCKGEQFVFEKGEYPRWDSWTNSRKSESISSLRPIKVDSQEHKIVLYENPNFTGKKIEIIDDDVPSFHAHGYQEKVSSVRVQSGTWVGYQYPGYRGYQYLFEKGDYKDSSDFGAQHPQIQSVRRIRDMQWHQRGTFHPTN.

Ala-2 bears the N-acetylalanine mark. An N-terminal arm region spans residues 2 to 16; sequence ASDHQSPATKQQQPS. 2 Beta/gamma crystallin 'Greek key' domains span residues 17–56 and 57–101; these read SKIV…LVHS and GPWV…RPIK. Residues 102 to 106 are connecting peptide; it reads VDSQE. Beta/gamma crystallin 'Greek key' domains are found at residues 107 to 148 and 149 to 191; these read HKIV…RVQS and GTWV…RRIR. Positions 193-205 are C-terminal arm; that stretch reads MQWHQRGTFHPTN.

Belongs to the beta/gamma-crystallin family. In terms of assembly, homo/heterodimer, or complexes of higher-order. The structure of beta-crystallin oligomers seems to be stabilized through interactions between the N-terminal arms. In terms of processing, the N-terminus is blocked.

Crystallins are the dominant structural components of the vertebrate eye lens. The polypeptide is Beta-crystallin B2 (Aquarana catesbeiana (American bullfrog)).